A 150-amino-acid chain; its full sequence is Large ribosomal subunit protein bL9 (150 aa).

The protein belongs to the bacterial ribosomal protein bL9 family.

Binds to the 23S rRNA. The protein is Large ribosomal subunit protein bL9 of Vesicomyosocius okutanii subsp. Calyptogena okutanii (strain HA).